An 88-amino-acid chain; its full sequence is MANTPQAKKRARQNEKARKHNASMRSMGRTYLKKVLSAIQTGDQAAAQAAYVSAVAVIDRIADKGLIHKNKAARHKSRLNAKLKAMAA.

Positions 1–27 (MANTPQAKKRARQNEKARKHNASMRSM) are disordered. Residues 7 to 22 (AKKRARQNEKARKHNA) show a composition bias toward basic residues.

This sequence belongs to the bacterial ribosomal protein bS20 family.

Functionally, binds directly to 16S ribosomal RNA. The chain is Small ribosomal subunit protein bS20 from Cellvibrio japonicus (strain Ueda107) (Pseudomonas fluorescens subsp. cellulosa).